A 70-amino-acid polypeptide reads, in one-letter code: Conotoxin Vc6.10 (70 aa).

An N-terminal signal peptide occupies residues 1–19 (MEKLTILLLVAAVLTSTQA). Positions 20-40 (LIQGGADERQKAKINFLSRSD) are excised as a propeptide. 3 cysteine pairs are disulfide-bonded: Cys43/Cys57, Cys50/Cys62, and Cys56/Cys69.

The protein belongs to the conotoxin O2 superfamily. As to expression, expressed by the venom duct.

The protein resides in the secreted. In terms of biological role, inhibits voltage-gated ion channels. This Conus victoriae (Queen Victoria cone) protein is Conotoxin Vc6.10.